A 136-amino-acid polypeptide reads, in one-letter code: Ribonuclease VapC47 (136 aa).

Residues 2–104 (IYMDTSALTK…AIHLAAAAQI (103 aa)) enclose the PINc domain. Mg(2+)-binding residues include Asp5 and Asp94.

Belongs to the PINc/VapC protein family. Mg(2+) serves as cofactor.

Functionally, toxic component of a type II toxin-antitoxin (TA) system. An RNase. Its toxic effect on colony formation is neutralized by coexpression with cognate antitoxin VapB47. The protein is Ribonuclease VapC47 of Mycobacterium tuberculosis (strain CDC 1551 / Oshkosh).